We begin with the raw amino-acid sequence, 613 residues long: Immunoglobulin superfamily member 8 (613 aa).

Positions 1-27 (MGALRPTLLPPSLPLLLLLMLGMGCWA) are cleaved as a signal peptide. Ig-like C2-type domains lie at 28–149 (REVL…LRVL), 162–286 (PRGR…WAQI), 303–424 (SQLA…EAAS), and 431–560 (PVHV…WYQA). Residues 28–579 (REVLVPEGPL…VYPYMHALDT (552 aa)) lie on the Extracellular side of the membrane. Residues C49 and C127 are joined by a disulfide bond. N50 carries an N-linked (GlcNAc...) asparagine glycan. A disordered region spans residues 155 to 174 (VSAAPPGPRGRQAPTSPPRM). C186 and C270 are disulfide-bonded. An EWI motif motif is present at residues 274 to 276 (EWI). Cystine bridges form between C326/C406 and C462/C544. N327 and N463 each carry an N-linked (GlcNAc...) asparagine glycan. S518 carries the post-translational modification Phosphoserine. The helical transmembrane segment at 580–600 (LFVPLLVGTGVALVTGATVLG) threads the bilayer. Residues 601–613 (TITCCFMKRLRKR) are Cytoplasmic-facing. S-palmitoyl cysteine attachment occurs at residues C604 and C605.

In terms of assembly, interacts directly with CD82, CD81/tetraspanin-28 and CD9/tetraspanin-29. Also interacts with integrin alpha-3/beta-1 and integrin alpha-4/beta-1. Interacts with HSPA8; this interaction modulates migratory and antigen-presenting capacities of dendritic cells. As to expression, expressed in brain, kidney, testis, liver and placenta with moderate expression in all other tissues. Detected on a majority of B-cells, T-cells, and natural killer cells. Expressed on dendritic cells.

The protein localises to the cell membrane. Its function is as follows. Member of the immunoglobulin superfamily (IgSF) that links tetraspanin-enriched microdomains to the actin cytoskeleton and plays several important roles in innate and adaptive immunity. Acts as an inducible receptor of HSPA8 on dendritic cells to enhance the CCL21/SLC-dependent migration of activated mature dendritic cells while attenuating their antigen-specific stimulatory capacities. In complex with alpha-actinins ACTN1 and ACTN4, regulates actin dynamics in the immune synapse and subsequent T-cell activation. Inhibits the entry of several viruses such as hepatitis C Virus (HCV) or HIV-1. Mechanistically, promotes a change in CD81 organization at the plasma membrane by significantly restricting its diffusion which in turn influences CD81 interaction with Claudin-1/CLDN1, preventing CLDN1 from acting as a co-receptor required for HCV entry. Accumulates at the presynaptic terminal, the producer cell side of the virological synapse, to prevent HIV-1 Env-mediated cell-cell fusion. Highly expressed on malignant cells with antigen presentation defects, interacts with NK receptor KIR3DL2 to suppress NK-cell cytotoxicity. May participate in the regulation of neurite outgrowth and maintenance of the neural network in the adult brain. In Homo sapiens (Human), this protein is Immunoglobulin superfamily member 8 (IGSF8).